The sequence spans 398 residues: Phosphoglycerate kinase (398 aa).

Residues 21 to 23, Arg-36, 59 to 62, Arg-119, and Arg-157 contribute to the substrate site; these read DFN and HLGR. ATP contacts are provided by residues Lys-208, Gly-296, Glu-327, and 354 to 357; that span reads GGDS.

It belongs to the phosphoglycerate kinase family. As to quaternary structure, monomer.

Its subcellular location is the cytoplasm. The catalysed reaction is (2R)-3-phosphoglycerate + ATP = (2R)-3-phospho-glyceroyl phosphate + ADP. It functions in the pathway carbohydrate degradation; glycolysis; pyruvate from D-glyceraldehyde 3-phosphate: step 2/5. This chain is Phosphoglycerate kinase, found in Streptococcus equi subsp. zooepidemicus (strain MGCS10565).